We begin with the raw amino-acid sequence, 408 residues long: Multidrug resistance protein MdtG (408 aa).

Transmembrane regions (helical) follow at residues 13-33, 51-71, 89-109, 112-132, 138-158, 170-190, 221-241, 253-273, 287-307, and 375-395; these read LYIA…VMPF, LWSG…SPFW, LGMA…QFLL, AALG…AIQV, GWAL…GPLL, PVFF…FFFI, LFVT…ILTL, LAFI…LSAP, ILVA…FVQS, and AVFL…WLSL.

It belongs to the major facilitator superfamily. DHA1 family. MdtG (TC 2.A.1.2.20) subfamily.

The protein resides in the cell inner membrane. The protein is Multidrug resistance protein MdtG of Dickeya zeae (strain Ech586) (Dickeya dadantii (strain Ech586)).